Reading from the N-terminus, the 170-residue chain is Cathelicidin antimicrobial peptide (170 aa).

An N-terminal signal peptide occupies residues 1-30 (MKTQRDGPSLGRWSLVLLLLGLTMPLAITA). Residues 31–131 (QVLSYQEAVL…DISCDKDERK (101 aa)) constitute a propeptide, cathelin-like domain (CLD). Cystine bridges form between C86–C97 and C108–C125. Residues 150–162 (FKKIGQKINDFLG) are active core.

It belongs to the cathelicidin family. Monomer, homodimer or homotrimer (in vitro). Oligomerizes as tetra- or hexamer in solution (in vitro). Proteolytically cleaved by proteinase PRTN3 into antibacterial peptide LL-37. Proteolytically cleaved by cathepsin CTSG and neutrophil elastase ELANE. In terms of processing, resistant to proteolytic degradation in solution, and when bound to both zwitterionic (mimicking mammalian membranes) and negatively charged membranes (mimicking bacterial membranes). Post-translationally, after secretion onto the skin surface, the CAMP gene product is processed by a serine protease-dependent mechanism into multiple novel antimicrobial peptides distinct from and shorter than cathelicidin LL-37. These peptides show enhanced antimicrobial action, acquiring the ability to kill skin pathogens such as S.aureus, E.coli and C.albicans. These peptides have lost the ability to stimulate CXCL8/IL8 release from keratinocytes. The peptides act synergistically, killing bacteria at lower concentrations when present together, and maintain activity at increased salt condition.

It is found in the secreted. The protein resides in the vesicle. In terms of biological role, antimicrobial protein that is an integral component of the innate immune system. Binds to bacterial lipopolysaccharides (LPS). Acts via neutrophil N-formyl peptide receptors to enhance the release of CXCL2. Postsecretory processing generates multiple cathelicidin antimicrobial peptides with various lengths which act as a topical antimicrobial defense in sweat on skin. The unprocessed precursor form, cathelicidin antimicrobial peptide, inhibits the growth of Gram-negative E.coli and E.aerogenes with efficiencies comparable to that of the mature peptide LL-37 (in vitro). Its function is as follows. Antimicrobial peptide that is an integral component of the innate immune system. Binds to bacterial lipopolysaccharides (LPS). Causes membrane permeabilization by forming transmembrane pores (in vitro). Causes lysis of E.coli. Exhibits antimicrobial activity against Gram-negative bacteria such as P.aeruginosa, S.typhimurium, E.aerogenes, E.coli and P.syringae, Gram-positive bacteria such as L.monocytogenes, S.epidermidis, S.pyogenes and S.aureus, as well as vancomycin-resistant enterococci (in vitro). Exhibits antimicrobial activity against methicillin-resistant S.aureus, P.mirabilis, and C.albicans in low-salt media, but not in media containing 100 mM NaCl (in vitro). Forms chiral supramolecular assemblies with quinolone signal (PQS) molecules of P.aeruginosa, which may lead to interference of bacterial quorum signaling and perturbance of bacterial biofilm formation. May form supramolecular fiber-like assemblies on bacterial membranes. Induces cytokine and chemokine producation as well as TNF/TNFA and CSF2/GMCSF production in normal human keratinocytes. Exhibits hemolytic activity against red blood cells. Exhibits antimicrobial activity against E.coli and B.megaterium (in vitro). This chain is Cathelicidin antimicrobial peptide, found in Cebus capucinus (White-faced sapajou).